The primary structure comprises 89 residues: Large ribosomal subunit protein bL28 (89 aa).

This sequence belongs to the bacterial ribosomal protein bL28 family.

This chain is Large ribosomal subunit protein bL28, found in Chlamydia pneumoniae (Chlamydophila pneumoniae).